Consider the following 31-residue polypeptide: Cyclotide mden-K (31 aa).

Residues 1–31 (GSIPCGESCVWIPCISSVVGCACKNKVCYKN) constitute a cross-link (cyclopeptide (Gly-Asn)). Intrachain disulfides connect Cys-5–Cys-21, Cys-9–Cys-23, and Cys-14–Cys-28.

This sequence belongs to the cyclotide family. Bracelet subfamily. This is a cyclic peptide.

Functionally, probably participates in a plant defense mechanism. This is Cyclotide mden-K from Melicytus dentatus (Tree violet).